Consider the following 504-residue polypeptide: Myocilin (504 aa).

An N-terminal signal peptide occupies residues 1 to 32 (MRFFCARCCSFGPEMPAVQLLLLACLVWDVGA). Asn57 carries an N-linked (GlcNAc...) asparagine glycan. Residues 74–184 (LQRDSSTQRL…QEVARLRRGQ (111 aa)) adopt a coiled-coil conformation. Disordered stretches follow at residues 106 to 131 (QAAR…RDQL) and 170 to 200 (LESS…PGSR). The segment covering 122–131 (GTLRRERDQL) has biased composition (basic and acidic residues). An Olfactomedin-like domain is found at 244–503 (GCGELVWVGE…MVTYDIKLSK (260 aa)). A disulfide bridge connects residues Cys245 and Cys433. Residues Asp380, Asn428, Ala429, Ile477, and Asp478 each contribute to the Ca(2+) site. The Microbody targeting signal motif lies at 502-504 (SKM).

In terms of assembly, homodimer (via N-terminus). Can also form higher oligomers. Interacts with OLFM3, FN1, NRCAM, GLDN and NFASC. Interacts (via N-terminus) with MYL2. Interacts with SFRP1, FRZB, FZD7, FZD10, FZD1 and WIF1; regulates Wnt signaling. Interacts with SNTA1; regulates muscle hypertrophy. Interacts with ERBB2 and ERBB3; activates ERBB2-ERBB3 signaling pathway. Interacts with SNCG; affects its secretion and its aggregation. In terms of processing, different isoforms may arise by post-translational modifications. Post-translationally, glycosylated. Palmitoylated. In terms of processing, undergoes a calcium-dependent proteolytic cleavage at Arg-226 by CAPN2 in the endoplasmic reticulum. The result is the production of two fragments, one of 35 kDa containing the C-terminal olfactomedin-like domain, and another of 20 kDa containing the N-terminal leucine zipper-like domain. Detected in aqueous humor. Detected in the eye (at protein level). Widely expressed. Highly expressed in various types of muscle, ciliary body, papillary sphincter, skeletal muscle, heart, and bone marrow-derived mesenchymal stem cells. Expressed predominantly in the retina. In normal eyes, found in the inner uveal meshwork region and the anterior portion of the meshwork. In contrast, in many glaucomatous eyes, it is found in more regions of the meshwork and seems to be expressed at higher levels than in normal eyes, regardless of the type or clinical severity of glaucoma. The myocilin 35 kDa fragment is detected in aqueous humor and to a lesser extent in iris and ciliary body.

It is found in the secreted. Its subcellular location is the golgi apparatus. It localises to the cytoplasmic vesicle. The protein resides in the extracellular space. The protein localises to the extracellular matrix. It is found in the extracellular exosome. Its subcellular location is the mitochondrion. It localises to the mitochondrion intermembrane space. The protein resides in the mitochondrion inner membrane. The protein localises to the mitochondrion outer membrane. It is found in the rough endoplasmic reticulum. Its subcellular location is the cell projection. It localises to the cilium. The protein resides in the endoplasmic reticulum. In terms of biological role, secreted glycoprotein regulating the activation of different signaling pathways in adjacent cells to control different processes including cell adhesion, cell-matrix adhesion, cytoskeleton organization and cell migration. Promotes substrate adhesion, spreading and formation of focal contacts. Negatively regulates cell-matrix adhesion and stress fiber assembly through Rho protein signal transduction. Modulates the organization of actin cytoskeleton by stimulating the formation of stress fibers through interactions with components of Wnt signaling pathways. Promotes cell migration through activation of PTK2 and the downstream phosphatidylinositol 3-kinase signaling. Plays a role in bone formation and promotes osteoblast differentiation in a dose-dependent manner through mitogen-activated protein kinase signaling. Mediates myelination in the peripheral nervous system through ERBB2/ERBB3 signaling. Plays a role as a regulator of muscle hypertrophy through the components of dystrophin-associated protein complex. Involved in positive regulation of mitochondrial depolarization. Plays a role in neurite outgrowth. May participate in the obstruction of fluid outflow in the trabecular meshwork. In Homo sapiens (Human), this protein is Myocilin (MYOC).